A 577-amino-acid chain; its full sequence is Aspartate--tRNA(Asp/Asn) ligase (577 aa).

Position 171 (glutamate 171) interacts with L-aspartate. Positions 195 to 198 (QLFK) are aspartate. Arginine 217 is an L-aspartate binding site. ATP contacts are provided by residues 217–219 (RDE) and glutamine 226. L-aspartate is bound at residue histidine 444. Glutamate 474 serves as a coordination point for ATP. Arginine 481 contributes to the L-aspartate binding site. ATP is bound at residue 526–529 (GFDR).

The protein belongs to the class-II aminoacyl-tRNA synthetase family. Type 1 subfamily. Homodimer.

The protein resides in the cytoplasm. The enzyme catalyses tRNA(Asx) + L-aspartate + ATP = L-aspartyl-tRNA(Asx) + AMP + diphosphate. Functionally, aspartyl-tRNA synthetase with relaxed tRNA specificity since it is able to aspartylate not only its cognate tRNA(Asp) but also tRNA(Asn). Reaction proceeds in two steps: L-aspartate is first activated by ATP to form Asp-AMP and then transferred to the acceptor end of tRNA(Asp/Asn). The protein is Aspartate--tRNA(Asp/Asn) ligase of Helicobacter pylori (strain Shi470).